A 130-amino-acid chain; its full sequence is D-ribose pyranase (130 aa).

His20 acts as the Proton donor in catalysis. Residues Asp28, His97, and 119–121 (YAN) contribute to the substrate site.

It belongs to the RbsD / FucU family. RbsD subfamily. Homodecamer.

The protein localises to the cytoplasm. The catalysed reaction is beta-D-ribopyranose = beta-D-ribofuranose. It functions in the pathway carbohydrate metabolism; D-ribose degradation; D-ribose 5-phosphate from beta-D-ribopyranose: step 1/2. In terms of biological role, catalyzes the interconversion of beta-pyran and beta-furan forms of D-ribose. The protein is D-ribose pyranase of Thermoanaerobacter pseudethanolicus (strain ATCC 33223 / 39E) (Clostridium thermohydrosulfuricum).